The primary structure comprises 305 residues: Glycine--tRNA ligase alpha subunit (305 aa).

It belongs to the class-II aminoacyl-tRNA synthetase family. Tetramer of two alpha and two beta subunits.

It is found in the cytoplasm. The enzyme catalyses tRNA(Gly) + glycine + ATP = glycyl-tRNA(Gly) + AMP + diphosphate. This is Glycine--tRNA ligase alpha subunit from Streptococcus pyogenes serotype M18 (strain MGAS8232).